The sequence spans 282 residues: F-box protein VBF (282 aa).

Positions 1-44 constitute an F-box domain; that stretch reads MMMLPEACIANILAFTSPADAFSSSEVSSVFRLAGDSDFVWEKF.

As to quaternary structure, component of SCF(VBF) E3 ubiquitin ligase complex that interacts with VIP1. Interacts directly with SKP1A and VIP1. Forms a complex composed of VIP1, VBF and Agrobacterium virE2.

Functionally, component of SCF(VBF) E3 ubiquitin ligase complexes, which mediate the ubiquitination and subsequent proteasomal degradation of target proteins such as VIP1 and Agrobacterium virE2, after their implication in T-DNA translocation to the host nucleus (can functionally replace Agrobacterium VirF). Required during Agrobacterium-induced tumor formation. The sequence is that of F-box protein VBF (VBF) from Arabidopsis thaliana (Mouse-ear cress).